We begin with the raw amino-acid sequence, 250 residues long: HTH-type transcriptional regulator SarS (250 aa).

2 DNA-binding regions (H-T-H motif) span residues 53 to 76 (FKKI…VLVK) and 177 to 200 (LKDL…NLKK).

This sequence belongs to the SarA family.

Its subcellular location is the cytoplasm. Functionally, transcriptional regulator that controls expression of some virulence factors in a cell density-dependent manner. The chain is HTH-type transcriptional regulator SarS (sarS) from Staphylococcus aureus (strain MRSA252).